Consider the following 89-residue polypeptide: Small ribosomal subunit protein bS20 (89 aa).

Positions M1–R20 are disordered.

Belongs to the bacterial ribosomal protein bS20 family.

In terms of biological role, binds directly to 16S ribosomal RNA. This is Small ribosomal subunit protein bS20 from Campylobacter curvus (strain 525.92).